Here is a 308-residue protein sequence, read N- to C-terminus: FGSLLGICLMTQIITGLLLAMHYTADTTLAFTSVAHMCRNVQFGWLIRNLHANGASFFFICIYLHIGRGLYYGSYLYKETWNIGVILLLTLMATAFVGYVLPWGQMSFWGATVITNLFSAIPYIGQTLVEWAWGGFSVDNPTLTRFFALHFLLHFIIAGLTFIHLTLLHETGSNNPLGISSNCDKIPFHPYFSTKDALGFILLLFPLMTLAMFSPNLLGDPENFTPANPLVTPPHIKPEWYFLFAYAILRSIPNKLGGVLALAASVLILLLIPLLHTSKQRTMTFRPLSQFLFWTLVMNLLILTWIGS.

4 helical membrane-spanning segments follow: residues 1–21 (FGSL…LLAM), 45–66 (WLIR…YLHI), 81–101 (WNIG…GYVL), and 146–166 (FFAL…IHLT). His51 and His65 together coordinate heme b. Heme b is bound by residues His150 and His164. His169 serves as a coordination point for a ubiquinone. Transmembrane regions (helical) follow at residues 194–214 (TKDA…AMFS), 256–276 (LGGV…PLLH), and 288–308 (LSQF…WIGS).

It belongs to the cytochrome b family. In terms of assembly, the cytochrome bc1 complex contains 11 subunits: 3 respiratory subunits (MT-CYB, CYC1 and UQCRFS1), 2 core proteins (UQCRC1 and UQCRC2) and 6 low-molecular weight proteins (UQCRH/QCR6, UQCRB/QCR7, UQCRQ/QCR8, UQCR10/QCR9, UQCR11/QCR10 and a cleavage product of UQCRFS1). This cytochrome bc1 complex then forms a dimer. Requires heme b as cofactor.

The protein localises to the mitochondrion inner membrane. In terms of biological role, component of the ubiquinol-cytochrome c reductase complex (complex III or cytochrome b-c1 complex) that is part of the mitochondrial respiratory chain. The b-c1 complex mediates electron transfer from ubiquinol to cytochrome c. Contributes to the generation of a proton gradient across the mitochondrial membrane that is then used for ATP synthesis. The polypeptide is Cytochrome b (MT-CYB) (Zaratornis stresemanni (White-cheeked cotinga)).